We begin with the raw amino-acid sequence, 223 residues long: Deoxyribose-phosphate aldolase (223 aa).

D92 serves as the catalytic Proton donor/acceptor. The Schiff-base intermediate with acetaldehyde role is filled by K158. The active-site Proton donor/acceptor is the K188.

The protein belongs to the DeoC/FbaB aldolase family. DeoC type 1 subfamily.

It is found in the cytoplasm. The catalysed reaction is 2-deoxy-D-ribose 5-phosphate = D-glyceraldehyde 3-phosphate + acetaldehyde. It participates in carbohydrate degradation; 2-deoxy-D-ribose 1-phosphate degradation; D-glyceraldehyde 3-phosphate and acetaldehyde from 2-deoxy-alpha-D-ribose 1-phosphate: step 2/2. Catalyzes a reversible aldol reaction between acetaldehyde and D-glyceraldehyde 3-phosphate to generate 2-deoxy-D-ribose 5-phosphate. The polypeptide is Deoxyribose-phosphate aldolase (Mycobacterium avium (strain 104)).